The following is a 415-amino-acid chain: Corticotropin-releasing factor receptor 1 (415 aa).

Positions 1–23 (MGQRPQLRLVKALLLLGLNPVST) are cleaved as a signal peptide. Over 24–111 (SLQDQQCESL…CQEILNEEKK (88 aa)) the chain is Extracellular. Disulfide bonds link cysteine 30–cysteine 54, cysteine 44–cysteine 87, and cysteine 68–cysteine 102. 5 N-linked (GlcNAc...) asparagine glycosylation sites follow: asparagine 38, asparagine 45, asparagine 78, asparagine 90, and asparagine 98. The tract at residues 99–108 (YSECQEILNE) is important for peptide agonist binding. The chain crosses the membrane as a helical span at residues 112–142 (SKVHYHIAVIINYLGHCISLVALLVAFVLFL). The Cytoplasmic portion of the chain corresponds to 143–149 (RLRSIRC). The helical transmembrane segment at 150 to 174 (LRNIIHWNLISAFILRNATWFVVQL) threads the bilayer. The Extracellular segment spans residues 175–189 (TVSPEVHQSNVAWCR). Residues cysteine 188 and cysteine 258 are joined by a disulfide bond. The chain crosses the membrane as a helical span at residues 190–218 (LVTAAYNYFHVTNFFWMFGEGCYLHTAIV). Over 219–225 (LTYSTDR) the chain is Cytoplasmic. Residues 226-253 (LRKWMFVCIGWGVPFPIIVAWAIGKLYY) traverse the membrane as a helical segment. The Extracellular portion of the chain corresponds to 254–269 (DNEKCWFGKRPGVYTD). Residues 270–295 (YIYQGPMILVLLINFIFLFNIVRILM) form a helical membrane-spanning segment. Positions 280–290 (LLINFIFLFNI) are important for antagonist binding. Over 296–306 (TKLRASTTSET) the chain is Cytoplasmic. Serine 301 carries the post-translational modification Phosphoserine; by PKA. The helical transmembrane segment at 307–331 (IQYRKAVKATLVLLPLLGITYMLFF) threads the bilayer. At 332–338 (VNPGEDE) the chain is on the extracellular side. Residues 339–368 (VSRVVFIYFNSFLESFQGFFVSVFYCFLNS) form a helical membrane-spanning segment. Residues 369–415 (EVRSAIRKRWRRWQDKHSIRARVARAMSIPTSPTRVSFHSIKQSTAV) are Cytoplasmic-facing.

This sequence belongs to the G-protein coupled receptor 2 family. Heterodimer; heterodimerizes with GPER1. Interacts (via N-terminal extracellular domain) with CRH and UCN. Interacts with DLG1; this inhibits endocytosis of CRHR1 after agonist binding. C-terminal Ser or Thr residues may be phosphorylated. Post-translationally, phosphorylation at Ser-301 by PKA prevents maximal coupling to Gq-protein, and thereby negatively regulates downstream signaling. As to expression, detected in brain cortex (at protein level).

Its subcellular location is the cell membrane. It localises to the endosome. In terms of biological role, G-protein coupled receptor for CRH (corticotropin-releasing factor) and UCN (urocortin). Has high affinity for CRH and UCN. Ligand binding causes a conformation change that triggers signaling via guanine nucleotide-binding proteins (G proteins) and down-stream effectors, such as adenylate cyclase. Promotes the activation of adenylate cyclase, leading to increased intracellular cAMP levels. Inhibits the activity of the calcium channel CACNA1H. Required for normal embryonic development of the adrenal gland and for normal hormonal responses to stress. Plays a role in the response to anxiogenic stimuli. This chain is Corticotropin-releasing factor receptor 1 (Crhr1), found in Mus musculus (Mouse).